A 411-amino-acid polypeptide reads, in one-letter code: Na(+)-translocating NADH-quinone reductase subunit F (411 aa).

A helical transmembrane segment spans residues 5–25; it reads VILALGIAAFTVIVLVLVAII. Residues 36 to 130 enclose the 2Fe-2S ferredoxin-type domain; that stretch reads GDITIDINDD…NMEVELPEEI (95 aa). Positions 73, 79, 82, and 114 each coordinate [2Fe-2S] cluster. The 141-residue stretch at 133–273 folds into the FAD-binding FR-type domain; sequence VKKWECTVIS…SGPFGEFFAK (141 aa). The catalytic stretch occupies residues 276-393; the sequence is DAEMVFIGGG…PVMNAAVIKM (118 aa).

The protein belongs to the NqrF family. Composed of six subunits; NqrA, NqrB, NqrC, NqrD, NqrE and NqrF. Requires [2Fe-2S] cluster as cofactor. FAD is required as a cofactor.

It is found in the cell inner membrane. The catalysed reaction is a ubiquinone + n Na(+)(in) + NADH + H(+) = a ubiquinol + n Na(+)(out) + NAD(+). Its function is as follows. NQR complex catalyzes the reduction of ubiquinone-1 to ubiquinol by two successive reactions, coupled with the transport of Na(+) ions from the cytoplasm to the periplasm. The first step is catalyzed by NqrF, which accepts electrons from NADH and reduces ubiquinone-1 to ubisemiquinone by a one-electron transfer pathway. The polypeptide is Na(+)-translocating NADH-quinone reductase subunit F (Haemophilus influenzae (strain ATCC 51907 / DSM 11121 / KW20 / Rd)).